The following is a 326-amino-acid chain: Interleukin-1-binding protein (326 aa).

An N-terminal signal peptide occupies residues 1–18 (MSILPVIFLSIFFYSSFV). Ig-like domains are found at residues 24 to 115 (PECI…LNLT), 122 to 212 (SNID…RIVK), and 221 to 322 (PSTM…KTVT). An intrachain disulfide couples Cys-48 to Cys-99. Asn-80, Asn-103, and Asn-113 each carry an N-linked (GlcNAc...) asparagine; by host glycan. Residues Cys-143 and Cys-194 are joined by a disulfide bond. N-linked (GlcNAc...) asparagine; by host glycosylation is found at Asn-206 and Asn-237. Cys-242 and Cys-309 are disulfide-bonded.

Belongs to the interleukin-1 receptor family. In terms of assembly, interacts with mouse Il1b.

It is found in the secreted. In terms of biological role, may reduce the host inflammatory response by interacting with inteleukin-1 beta (Il1b) and thus decreasing the association between IL1B and its cellular receptor. This Vaccinia virus (strain Western Reserve) (VACV) protein is Interleukin-1-binding protein (OPG201).